The chain runs to 259 residues: Secretion system apparatus protein SsaT (259 aa).

Helical transmembrane passes span 9–29 (LIAL…LPLL), 35–55 (GAAL…LPII), 78–98 (VIIG…VDMA), 127–147 (LLFS…EFIL), 185–205 (ISFS…LGLL), and 214–234 (VFFF…LISF).

The protein belongs to the FliR/MopE/SpaR family.

It is found in the cell membrane. Functionally, part of a type III secretion system. The sequence is that of Secretion system apparatus protein SsaT (ssaT) from Salmonella typhimurium (strain LT2 / SGSC1412 / ATCC 700720).